Here is a 523-residue protein sequence, read N- to C-terminus: 2-oxopropyl-CoM reductase, carboxylating (523 aa).

53-54 (AA) contributes to the FAD binding site. Arginine 56 contacts 2-oxopropyl-coenzyme M. Serine 81 is an FAD binding site. Cysteine 82 contacts 2-oxopropyl-coenzyme M. A disulfide bridge connects residues cysteine 82 and cysteine 87. Alanine 158 is a binding site for FAD. NADP(+) is bound by residues 222 to 225 (GSKT) and 245 to 246 (RT). Aspartate 353 serves as a coordination point for FAD. Glutamate 360 contacts NADP(+). Residue methionine 361 participates in FAD binding. Arginine 365 is a binding site for 2-oxopropyl-coenzyme M. Phenylalanine 501 serves as a coordination point for FAD.

Belongs to the class-I pyridine nucleotide-disulfide oxidoreductase family. Homodimer. Component II of the aliphatic epoxide carboxylation complex together with components I, III and IV. The cofactor is FAD.

The enzyme catalyses coenzyme M + acetoacetate + NADP(+) = 2-oxopropyl-coenzyme M + CO2 + NADPH. It functions in the pathway alkene metabolism; propylene degradation. Inhibited (at 40%) by the coenzyme M analog 2-bromoethanesulfonate (BES). BES is a time-dependent inactivator of dithiothreitol-reduced 2-KPCC, where the redox active cysteines are in the free thiol forms. BES does not inactivate air-oxidized 2-KPCC, where the redox active cysteine pair is in the disulfide form. BES specifically alkylates the interchange thiol that facilitates thioether bond cleavage and enolacetone formation during catalysis. Its function is as follows. Involved in aliphatic epoxide carboxylation. Catalyzes the reductive cleavage of the thioether bond of 2-oxopropyl-coenzyme M (2-KPC), and the subsequent carboxylation of the ketopropyl cleavage product, yielding the products acetoacetate and free coenzyme M. The polypeptide is 2-oxopropyl-CoM reductase, carboxylating (Xanthobacter autotrophicus (strain ATCC BAA-1158 / Py2)).